A 108-amino-acid chain; its full sequence is Protein Asterix (108 aa).

The tract at residues 1–29 is disordered; it reads MNMTVDPRRKEKINRYKAPKNQGQSGGAN. A helical transmembrane segment spans residues 80–96; that stretch reads VLSSFMLSVSAVVMSYL.

The protein belongs to the Asterix family.

The protein localises to the membrane. The protein is Protein Asterix of Drosophila melanogaster (Fruit fly).